A 299-amino-acid polypeptide reads, in one-letter code: Oxygen-dependent coproporphyrinogen-III oxidase (299 aa).

S92 serves as a coordination point for substrate. Mn(2+) is bound by residues H96 and H106. Residue H106 is the Proton donor of the active site. 108–110 is a binding site for substrate; it reads NVR. Residues H145 and H175 each contribute to the Mn(2+) site. The interval 240 to 275 is important for dimerization; it reads YVEFNLVWDRGTLFGLQTGGRTESILMSMPPLVRWE. Residue 258–260 coordinates substrate; it reads GGR.

This sequence belongs to the aerobic coproporphyrinogen-III oxidase family. Homodimer. Mn(2+) serves as cofactor.

The protein resides in the cytoplasm. The catalysed reaction is coproporphyrinogen III + O2 + 2 H(+) = protoporphyrinogen IX + 2 CO2 + 2 H2O. Its pathway is porphyrin-containing compound metabolism; protoporphyrin-IX biosynthesis; protoporphyrinogen-IX from coproporphyrinogen-III (O2 route): step 1/1. Functionally, involved in the heme biosynthesis. Catalyzes the aerobic oxidative decarboxylation of propionate groups of rings A and B of coproporphyrinogen-III to yield the vinyl groups in protoporphyrinogen-IX. In Escherichia fergusonii (strain ATCC 35469 / DSM 13698 / CCUG 18766 / IAM 14443 / JCM 21226 / LMG 7866 / NBRC 102419 / NCTC 12128 / CDC 0568-73), this protein is Oxygen-dependent coproporphyrinogen-III oxidase.